A 268-amino-acid polypeptide reads, in one-letter code: ClpXP adapter protein SpxH (268 aa).

The protein belongs to the SpxH family. In terms of assembly, interacts with Spx.

The protein localises to the cytoplasm. Adapter protein required for efficient degradation of Spx by ClpXP under non-stress conditions. Interaction with Spx stabilizes Spx and exposes the C-terminus of Spx for recognition and proteolysis by ClpXP. The polypeptide is ClpXP adapter protein SpxH (Staphylococcus aureus (strain COL)).